Consider the following 338-residue polypeptide: Large ribosomal subunit protein uL10 (338 aa).

A disordered region spans residues 302–338; it reads IAAQPQPAEEAEEKVEEEEEEEKEEEEALAGLGALFG. Over residues 310-329 the composition is skewed to acidic residues; it reads EEAEEKVEEEEEEEKEEEEA.

Belongs to the universal ribosomal protein uL10 family. In terms of assembly, part of the 50S ribosomal subunit. Forms part of the ribosomal stalk which helps the ribosome interact with GTP-bound translation factors. Forms a heptameric L10(L12)2(L12)2(L12)2 complex, where L10 forms an elongated spine to which the L12 dimers bind in a sequential fashion.

Forms part of the ribosomal stalk, playing a central role in the interaction of the ribosome with GTP-bound translation factors. In Thermococcus sibiricus (strain DSM 12597 / MM 739), this protein is Large ribosomal subunit protein uL10.